Reading from the N-terminus, the 421-residue chain is Testin (421 aa).

Residues 92-199 (MILTNPVAAK…GDVKLPREMN (108 aa)) form the PET domain. The tract at residues 133 to 164 (EKQPVAGSEGAQYRKKQLAKQLPAHDQDPSKC) is disordered. Positions 155–164 (PAHDQDPSKC) are enriched in basic and acidic residues. LIM zinc-binding domains are found at residues 234–297 (YSCY…CDSE), 299–359 (PRCA…NHAV), and 362–421 (QGCH…KMMS).

Belongs to the prickle / espinas / testin family. Interacts via LIM domain 1 with ZYX. Interacts (via LIM domain 3) with ENAH and VASP. Interacts with ALKBH4, talin, actin, alpha-actinin, GRIP1 and PXN. Interacts (via LIM domain 2) with ACTL7A (via N-terminus). Heterodimer with ACTL7A; the heterodimer interacts with ENAH to form a heterotrimer.

It localises to the cytoplasm. It is found in the cell junction. Its subcellular location is the focal adhesion. Functionally, scaffold protein that may play a role in cell adhesion, cell spreading and in the reorganization of the actin cytoskeleton. Plays a role in the regulation of cell proliferation. May act as a tumor suppressor. This chain is Testin (TES), found in Sus scrofa (Pig).